The sequence spans 360 residues: Photosystem II protein D1 (360 aa).

Topologically, residues Met1–Leu28 are cytoplasmic. Residues Tyr29–Ile46 traverse the membrane as a helical segment. Residues Cys47–Phe117 are Lumenal-facing. His118 serves as a coordination point for chlorophyll a. The helical transmembrane segment at His118–Leu133 threads the bilayer. Residues Tyr126 and Gln130 each contribute to the pheophytin a site. Over Ser134–Pro141 the chain is Cytoplasmic. Residues Trp142 to Ala156 traverse the membrane as a helical segment. Tyr147 is a pheophytin a binding site. Over Val157–Pro196 the chain is Lumenal. [CaMn4O5] cluster-binding residues include Asp170 and Glu189. A helical transmembrane segment spans residues Phe197–Leu218. A chlorophyll a-binding site is contributed by His198. Met214 contacts pheophytin a. A quinone-binding positions include His215 and Ser264–Phe265. Fe cation is bound at residue His215. At Val219–Phe273 the chain is on the cytoplasmic side. His272 lines the Fe cation pocket. Residues Phe274–Leu288 traverse the membrane as a helical segment. Residues Gly289–Gly360 are Lumenal-facing. [CaMn4O5] cluster is bound by residues His332, Glu333, Asp342, and Ala344. A propeptide spanning residues Ser345 to Gly360 is cleaved from the precursor.

This sequence belongs to the reaction center PufL/M/PsbA/D family. PSII is composed of 1 copy each of membrane proteins PsbA, PsbB, PsbC, PsbD, PsbE, PsbF, PsbH, PsbI, PsbJ, PsbK, PsbL, PsbM, PsbT, PsbX, PsbY, PsbZ, Psb30/Ycf12, peripheral proteins PsbO, CyanoQ (PsbQ), PsbU, PsbV and a large number of cofactors. It forms dimeric complexes. Requires The D1/D2 heterodimer binds P680, chlorophylls that are the primary electron donor of PSII, and subsequent electron acceptors. It shares a non-heme iron and each subunit binds pheophytin, quinone, additional chlorophylls, carotenoids and lipids. D1 provides most of the ligands for the Mn4-Ca-O5 cluster of the oxygen-evolving complex (OEC). There is also a Cl(-1) ion associated with D1 and D2, which is required for oxygen evolution. The PSII complex binds additional chlorophylls, carotenoids and specific lipids. as cofactor. C-terminally processed by CtpA; processing is essential to allow assembly of the oxygen-evolving complex and thus photosynthetic growth. Post-translationally, tyr-161 forms a radical intermediate that is referred to as redox-active TyrZ, YZ or Y-Z.

Its subcellular location is the cellular thylakoid membrane. It catalyses the reaction 2 a plastoquinone + 4 hnu + 2 H2O = 2 a plastoquinol + O2. Photosystem II (PSII) is a light-driven water:plastoquinone oxidoreductase that uses light energy to abstract electrons from H(2)O, generating O(2) and a proton gradient subsequently used for ATP formation. It consists of a core antenna complex that captures photons, and an electron transfer chain that converts photonic excitation into a charge separation. The D1/D2 (PsbA/PsbD) reaction center heterodimer binds P680, the primary electron donor of PSII as well as several subsequent electron acceptors. The polypeptide is Photosystem II protein D1 (Thermostichus vulcanus (Synechococcus vulcanus)).